The sequence spans 739 residues: UPF0313 protein YgiQ (739 aa).

Residues Ala-372–Ala-650 enclose the Radical SAM core domain. Residues Cys-386, Cys-390, and Cys-393 each contribute to the [4Fe-4S] cluster site. Positions Glu-686–Arg-739 are disordered. Over residues Met-704 to Pro-724 the composition is skewed to polar residues. Basic residues predominate over residues Ala-729–Arg-739.

Belongs to the UPF0313 family. [4Fe-4S] cluster is required as a cofactor.

The sequence is that of UPF0313 protein YgiQ from Escherichia coli O157:H7.